Reading from the N-terminus, the 521-residue chain is Manganese transporter pdt1 (521 aa).

The residue at position 42 (Ser-42) is a Phosphoserine. Thr-43 is modified (phosphothreonine). 12 helical membrane-spanning segments follow: residues 71–91 (YCKF…PGNY), 104–124 (KLLF…SLCI), 152–172 (VLAE…TAVA), 179–199 (IPLV…LIAW), 210–230 (IFET…AVVL), 233–253 (VHIG…TVFS), 260–280 (SIGI…SGLV), 325–345 (LFTF…AVFY), 373–393 (LFAV…TIAG), 417–437 (IAII…LNQV), 440–460 (ASQV…VMFT), and 495–515 (IVTW…IVWL).

It belongs to the NRAMP family.

The protein resides in the endoplasmic reticulum membrane. Its function is as follows. Transports manganese ions into the cell. Regulates cell morphogenesis through control of manganese homeostasis. This chain is Manganese transporter pdt1 (pdt1), found in Schizosaccharomyces pombe (strain 972 / ATCC 24843) (Fission yeast).